We begin with the raw amino-acid sequence, 427 residues long: Adenylosuccinate synthetase (427 aa).

GTP contacts are provided by residues 12-18 (GDEGKGK) and 40-42 (GHT). Asp-13 functions as the Proton acceptor in the catalytic mechanism. The Mg(2+) site is built by Asp-13 and Gly-40. IMP-binding positions include 13–16 (DEGK), 38–41 (NAGH), Thr-128, Arg-142, Gln-223, Thr-238, and Arg-302. His-41 acts as the Proton donor in catalysis. 298–304 (TTTGRPR) is a substrate binding site. GTP-binding positions include Arg-304, 330 to 332 (KLD), and 412 to 414 (GVG).

Belongs to the adenylosuccinate synthetase family. Homodimer. Requires Mg(2+) as cofactor.

It is found in the cytoplasm. The catalysed reaction is IMP + L-aspartate + GTP = N(6)-(1,2-dicarboxyethyl)-AMP + GDP + phosphate + 2 H(+). Its pathway is purine metabolism; AMP biosynthesis via de novo pathway; AMP from IMP: step 1/2. Plays an important role in the de novo pathway of purine nucleotide biosynthesis. Catalyzes the first committed step in the biosynthesis of AMP from IMP. This Pelotomaculum thermopropionicum (strain DSM 13744 / JCM 10971 / SI) protein is Adenylosuccinate synthetase.